The chain runs to 301 residues: Rhodopsin (301 aa).

At 1–18 (LHMIHLHWYQYPPMNPMM) the chain is on the extracellular side. Residues 19 to 43 (YPLLLIFMFITGIPCLAGNFVTIWV) traverse the membrane as a helical segment. The Cytoplasmic portion of the chain corresponds to 44–55 (FMTTKSLRSPAN). The chain crosses the membrane as a helical span at residues 56–78 (LLVVNLAMSDFLMMFTMFPPMMI). Over 79–92 (TCYYHTWTLGPTFC) the chain is Extracellular. A disulfide bridge connects residues C92 and C169. A helical transmembrane segment spans residues 93–115 (QVYAFLGNLFGCTSIWTMVFITF). A 'Ionic lock' involved in activated form stabilization motif is present at residues 116–118 (DRY). Residues 116-134 (DRYNVIVKGVAGEPLSNKK) lie on the Cytoplasmic side of the membrane. Residues 135–155 (AALWILSAWVLSFSWCSAPFF) traverse the membrane as a helical segment. Residues 156 to 182 (GWNRYVPEGNLTGCGTDYLSEDALSRS) are Extracellular-facing. N165 carries N-linked (GlcNAc...) asparagine glycosylation. A helical transmembrane segment spans residues 183–204 (YLYVYSVWVYFLPLLITIYCYV). Topologically, residues 205-245 (FIIKAVAAHEKGMRDQAKKMGIKSLRNEEAQKTSAECRLAK) are cytoplasmic. A helical membrane pass occupies residues 246-267 (IAMTTVALWFIAWTPYLLINWV). Residues 268 to 278 (GMFARSYLSPV) are Extracellular-facing. Residues 279-300 (YTIWGYVFAKANAVYNPIVYAI) form a helical membrane-spanning segment. At K288 the chain carries N6-(retinylidene)lysine.

It belongs to the G-protein coupled receptor 1 family. Opsin subfamily. Homodimer. Interacts with GNAQ. Post-translationally, contains one covalently linked retinal chromophore.

The protein resides in the cell projection. Its subcellular location is the rhabdomere membrane. Its function is as follows. Photoreceptor required for image-forming vision at low light intensity. Can use both retinal and 3-dehydroretinal as visual pigment. Light-induced isomerization of 11-cis to all-trans retinal triggers a conformational change that activates signaling via G-proteins. Signaling via GNAQ probably mediates the activation of phospholipase C. In Cambarellus shufeldtii (Cajun dwarf crayfish), this protein is Rhodopsin (RHO).